A 79-amino-acid chain; its full sequence is U-actitoxin-Avd9d (79 aa).

Positions 1–19 are cleaved as a signal peptide; sequence NLKVLAVFVLCAILVVVTA. The propeptide occupies 20–37; that stretch reads ERRGTETGGYKKDTLEDL. Positions 44-79 constitute a ShKT domain; the sequence is CFDSFKEATCHMAKTNRLCKTSAKYQINCKKTCGLC. 3 disulfides stabilise this stretch: Cys-44-Cys-79, Cys-53-Cys-72, and Cys-62-Cys-76. Positions 67–68 are crucial for binding to potassium channels; it reads KY.

The protein belongs to the sea anemone type 1 potassium channel toxin family. Type 1b subfamily.

The protein resides in the secreted. It is found in the nematocyst. Its function is as follows. Inhibits voltage-gated potassium channels (Kv1/KCNA). This chain is U-actitoxin-Avd9d, found in Anemonia viridis (Snakelocks anemone).